Reading from the N-terminus, the 371-residue chain is D-erythrose-4-phosphate dehydrogenase (371 aa).

Residue 12-13 (RI) coordinates NAD(+). Substrate-binding positions include 154 to 156 (SCT), Arg200, 213 to 214 (TK), and Arg236. Cys155 acts as the Nucleophile in catalysis. Residue Asn318 participates in NAD(+) binding.

Belongs to the glyceraldehyde-3-phosphate dehydrogenase family. Epd subfamily. Homotetramer.

Its subcellular location is the cytoplasm. It catalyses the reaction D-erythrose 4-phosphate + NAD(+) + H2O = 4-phospho-D-erythronate + NADH + 2 H(+). Its pathway is cofactor biosynthesis; pyridoxine 5'-phosphate biosynthesis; pyridoxine 5'-phosphate from D-erythrose 4-phosphate: step 1/5. Its function is as follows. Catalyzes the NAD-dependent conversion of D-erythrose 4-phosphate to 4-phosphoerythronate. The polypeptide is D-erythrose-4-phosphate dehydrogenase (Psychromonas ingrahamii (strain DSM 17664 / CCUG 51855 / 37)).